We begin with the raw amino-acid sequence, 155 residues long: Histone H3-like centromeric protein hH3v (155 aa).

Residues 1-24 (MPPKKGGVTKSKAVSKKAAAVPTP) show a composition bias toward low complexity. The interval 1–56 (MPPKKGGVTKSKAVSKKAAAVPTPKATPPGRRKSRASSVQPGDPVPQGKKRRYRPG) is disordered. The H3-like stretch occupies residues 45–148 (VPQGKKRRYR…IQLARRIRGV (104 aa)).

The protein belongs to the histone H3 family. Component of centromeric nucleosomes, where DNA is wrapped around a histone octamer core. The octamer contains two molecules each of H2A, H2B, hH3v/CENPA and H4 assembled in one hH3v-H4 heterotetramer and two H2A-H2B heterodimers. Interacts with the inner kinetochore. Ubiquitinated. Is degraded through ubiquitin-mediated proteolysis when not protected by its association to the kinetochore.

It is found in the nucleus. The protein resides in the chromosome. Its subcellular location is the centromere. Functionally, histone H3-like nucleosomal protein that is specifically found in centromeric nucleosomes. Replaces conventional H3 in the nucleosome core of centromeric chromatin that serves as an assembly site for the inner kinetochore. Required for recruitment and assembly of kinetochore proteins, mitotic progression and chromosome segregation. May serve as an epigenetic mark that propagates centromere identity through replication and cell division. This is Histone H3-like centromeric protein hH3v (hH3v) from Neurospora crassa (strain ATCC 24698 / 74-OR23-1A / CBS 708.71 / DSM 1257 / FGSC 987).